Here is a 73-residue protein sequence, read N- to C-terminus: Small, acid-soluble spore protein C5 (73 aa).

Belongs to the alpha/beta-type SASP family.

In terms of biological role, SASP are bound to spore DNA. They are double-stranded DNA-binding proteins that cause DNA to change to an a-like conformation. They protect the DNA backbone from chemical and enzymatic cleavage and are thus involved in dormant spore's high resistance to UV light. The sequence is that of Small, acid-soluble spore protein C5 (SASP-C5) from Priestia megaterium (Bacillus megaterium).